A 154-amino-acid chain; its full sequence is MTIIEGNLRTENAKYGIVVAQFNEFINAKLLSGALDALKRHGVQEEEIDIAWVPGAFEIPIIAQKMATSNKYEAIICLGTVIRGSTSHYDFVCNEVSKGIAHVSLNSNIPVMFGVLTTENIEQAIERAGTKAGNKGFEVAVGAIEMVDLMRKIG.

5-amino-6-(D-ribitylamino)uracil-binding positions include F22, 56 to 58, and 80 to 82; these read AFE and TVI. 85–86 is a (2S)-2-hydroxy-3-oxobutyl phosphate binding site; it reads ST. The active-site Proton donor is the H88. Position 113 (F113) interacts with 5-amino-6-(D-ribitylamino)uracil. Position 127 (R127) interacts with (2S)-2-hydroxy-3-oxobutyl phosphate.

The protein belongs to the DMRL synthase family.

The catalysed reaction is (2S)-2-hydroxy-3-oxobutyl phosphate + 5-amino-6-(D-ribitylamino)uracil = 6,7-dimethyl-8-(1-D-ribityl)lumazine + phosphate + 2 H2O + H(+). It functions in the pathway cofactor biosynthesis; riboflavin biosynthesis; riboflavin from 2-hydroxy-3-oxobutyl phosphate and 5-amino-6-(D-ribitylamino)uracil: step 1/2. In terms of biological role, catalyzes the formation of 6,7-dimethyl-8-ribityllumazine by condensation of 5-amino-6-(D-ribitylamino)uracil with 3,4-dihydroxy-2-butanone 4-phosphate. This is the penultimate step in the biosynthesis of riboflavin. This chain is 6,7-dimethyl-8-ribityllumazine synthase, found in Lactococcus lactis subsp. lactis (strain IL1403) (Streptococcus lactis).